The chain runs to 235 residues: 2-C-methyl-D-erythritol 4-phosphate cytidylyltransferase (235 aa).

It belongs to the IspD/TarI cytidylyltransferase family. IspD subfamily.

The catalysed reaction is 2-C-methyl-D-erythritol 4-phosphate + CTP + H(+) = 4-CDP-2-C-methyl-D-erythritol + diphosphate. The protein operates within isoprenoid biosynthesis; isopentenyl diphosphate biosynthesis via DXP pathway; isopentenyl diphosphate from 1-deoxy-D-xylulose 5-phosphate: step 2/6. Its function is as follows. Catalyzes the formation of 4-diphosphocytidyl-2-C-methyl-D-erythritol from CTP and 2-C-methyl-D-erythritol 4-phosphate (MEP). The sequence is that of 2-C-methyl-D-erythritol 4-phosphate cytidylyltransferase from Leptospira borgpetersenii serovar Hardjo-bovis (strain L550).